The following is a 95-amino-acid chain: Co-chaperonin GroES (95 aa).

The protein belongs to the GroES chaperonin family. Heptamer of 7 subunits arranged in a ring. Interacts with the chaperonin GroEL.

Its subcellular location is the cytoplasm. Functionally, together with the chaperonin GroEL, plays an essential role in assisting protein folding. The GroEL-GroES system forms a nano-cage that allows encapsulation of the non-native substrate proteins and provides a physical environment optimized to promote and accelerate protein folding. GroES binds to the apical surface of the GroEL ring, thereby capping the opening of the GroEL channel. The protein is Co-chaperonin GroES of Zymomonas mobilis subsp. mobilis (strain ATCC 31821 / ZM4 / CP4).